We begin with the raw amino-acid sequence, 255 residues long: 5'-nucleotidase SurE (255 aa).

A divalent metal cation contacts are provided by Asp-8, Asp-9, Ser-39, and Asn-95.

It belongs to the SurE nucleotidase family. The cofactor is a divalent metal cation.

It is found in the cytoplasm. It carries out the reaction a ribonucleoside 5'-phosphate + H2O = a ribonucleoside + phosphate. In terms of biological role, nucleotidase that shows phosphatase activity on nucleoside 5'-monophosphates. The polypeptide is 5'-nucleotidase SurE (Herpetosiphon aurantiacus (strain ATCC 23779 / DSM 785 / 114-95)).